We begin with the raw amino-acid sequence, 156 residues long: Small ribosomal subunit protein uS7 (156 aa).

It belongs to the universal ribosomal protein uS7 family. Part of the 30S ribosomal subunit. Contacts proteins S9 and S11.

One of the primary rRNA binding proteins, it binds directly to 16S rRNA where it nucleates assembly of the head domain of the 30S subunit. Is located at the subunit interface close to the decoding center, probably blocks exit of the E-site tRNA. The sequence is that of Small ribosomal subunit protein uS7 from Clavibacter sepedonicus (Clavibacter michiganensis subsp. sepedonicus).